The sequence spans 448 residues: uncharacterized protein (448 aa).

Lysine 297 carries the post-translational modification N6-(pyridoxal phosphate)lysine.

This sequence belongs to the class-III pyridoxal-phosphate-dependent aminotransferase family. Pyridoxal 5'-phosphate is required as a cofactor.

This is an uncharacterized protein from Sinorhizobium fredii (strain NBRC 101917 / NGR234).